Reading from the N-terminus, the 124-residue chain is Small ribosomal subunit protein uS12 (124 aa).

Residues M1 to Q29 form a disordered region. Position 90 is a 3-methylthioaspartic acid (D90).

Belongs to the universal ribosomal protein uS12 family. As to quaternary structure, part of the 30S ribosomal subunit. Contacts proteins S8 and S17. May interact with IF1 in the 30S initiation complex.

In terms of biological role, with S4 and S5 plays an important role in translational accuracy. Its function is as follows. Interacts with and stabilizes bases of the 16S rRNA that are involved in tRNA selection in the A site and with the mRNA backbone. Located at the interface of the 30S and 50S subunits, it traverses the body of the 30S subunit contacting proteins on the other side and probably holding the rRNA structure together. The combined cluster of proteins S8, S12 and S17 appears to hold together the shoulder and platform of the 30S subunit. The protein is Small ribosomal subunit protein uS12 of Anaplasma marginale (strain Florida).